Here is a 371-residue protein sequence, read N- to C-terminus: Queuine tRNA-ribosyltransferase (371 aa).

Asp-90 (proton acceptor) is an active-site residue. Substrate-binding positions include 90–94 (DSGGF), Asp-144, Gln-188, and Gly-215. Positions 246 to 252 (GVGTPED) are RNA binding. Residue Asp-265 is the Nucleophile of the active site. The segment at 270-274 (TRNAR) is RNA binding; important for wobble base 34 recognition. Positions 303, 305, 308, and 334 each coordinate Zn(2+).

The protein belongs to the queuine tRNA-ribosyltransferase family. As to quaternary structure, homodimer. Within each dimer, one monomer is responsible for RNA recognition and catalysis, while the other monomer binds to the replacement base PreQ1. Requires Zn(2+) as cofactor.

The enzyme catalyses 7-aminomethyl-7-carbaguanine + guanosine(34) in tRNA = 7-aminomethyl-7-carbaguanosine(34) in tRNA + guanine. It functions in the pathway tRNA modification; tRNA-queuosine biosynthesis. Catalyzes the base-exchange of a guanine (G) residue with the queuine precursor 7-aminomethyl-7-deazaguanine (PreQ1) at position 34 (anticodon wobble position) in tRNAs with GU(N) anticodons (tRNA-Asp, -Asn, -His and -Tyr). Catalysis occurs through a double-displacement mechanism. The nucleophile active site attacks the C1' of nucleotide 34 to detach the guanine base from the RNA, forming a covalent enzyme-RNA intermediate. The proton acceptor active site deprotonates the incoming PreQ1, allowing a nucleophilic attack on the C1' of the ribose to form the product. After dissociation, two additional enzymatic reactions on the tRNA convert PreQ1 to queuine (Q), resulting in the hypermodified nucleoside queuosine (7-(((4,5-cis-dihydroxy-2-cyclopenten-1-yl)amino)methyl)-7-deazaguanosine). This chain is Queuine tRNA-ribosyltransferase, found in Neisseria meningitidis serogroup B (strain ATCC BAA-335 / MC58).